A 643-amino-acid chain; its full sequence is Phosphomethylpyrimidine synthase (643 aa).

Residues Asn-248, Met-277, Tyr-306, His-342, 362–364 (SRG), 403–406 (DGLR), and Glu-442 each bind substrate. His-446 contacts Zn(2+). Tyr-469 serves as a coordination point for substrate. His-510 is a Zn(2+) binding site. [4Fe-4S] cluster is bound by residues Cys-590, Cys-593, and Cys-598.

It belongs to the ThiC family. As to quaternary structure, homodimer. The cofactor is [4Fe-4S] cluster.

It carries out the reaction 5-amino-1-(5-phospho-beta-D-ribosyl)imidazole + S-adenosyl-L-methionine = 4-amino-2-methyl-5-(phosphooxymethyl)pyrimidine + CO + 5'-deoxyadenosine + formate + L-methionine + 3 H(+). It participates in cofactor biosynthesis; thiamine diphosphate biosynthesis. Its function is as follows. Catalyzes the synthesis of the hydroxymethylpyrimidine phosphate (HMP-P) moiety of thiamine from aminoimidazole ribotide (AIR) in a radical S-adenosyl-L-methionine (SAM)-dependent reaction. The chain is Phosphomethylpyrimidine synthase from Paraburkholderia phymatum (strain DSM 17167 / CIP 108236 / LMG 21445 / STM815) (Burkholderia phymatum).